Consider the following 305-residue polypeptide: MIFQQTLGNKATFSGIGLHTGKTITLTLRPAEAGTGIVFHRVDLAPAVSIEAHASNVVNTRLSTTIGRGDASVSTIEHLMAALYGCGIDNAHVDIDGPEVPIMDGSAAPFVAAITKAGVKVSGKARKYLVVKKPVTVVDGDKKATIIPSRHYKISFDMQFAHPAVKSQFRSLEFSQESFIGDFAAARTFGFLAEVEMMKSHGLALGGSLENAVVIGDNGVINPEGLRFQDEFVRHKILDSVGDLSLTGHRLIGHVKATKSGHDLNHKLVTELLKRPDCYTLIEFTPQAFNAPFNIGIPELSWLEA.

Zn(2+) is bound by residues histidine 78, histidine 235, and aspartate 239. Histidine 262 acts as the Proton donor in catalysis.

The protein belongs to the LpxC family. Zn(2+) is required as a cofactor.

The catalysed reaction is a UDP-3-O-[(3R)-3-hydroxyacyl]-N-acetyl-alpha-D-glucosamine + H2O = a UDP-3-O-[(3R)-3-hydroxyacyl]-alpha-D-glucosamine + acetate. Its pathway is glycolipid biosynthesis; lipid IV(A) biosynthesis; lipid IV(A) from (3R)-3-hydroxytetradecanoyl-[acyl-carrier-protein] and UDP-N-acetyl-alpha-D-glucosamine: step 2/6. In terms of biological role, catalyzes the hydrolysis of UDP-3-O-myristoyl-N-acetylglucosamine to form UDP-3-O-myristoylglucosamine and acetate, the committed step in lipid A biosynthesis. The polypeptide is UDP-3-O-acyl-N-acetylglucosamine deacetylase (Citrifermentans bemidjiense (strain ATCC BAA-1014 / DSM 16622 / JCM 12645 / Bem) (Geobacter bemidjiensis)).